The primary structure comprises 120 residues: Large ribosomal subunit protein bL20 (120 aa).

Belongs to the bacterial ribosomal protein bL20 family.

Functionally, binds directly to 23S ribosomal RNA and is necessary for the in vitro assembly process of the 50S ribosomal subunit. It is not involved in the protein synthesizing functions of that subunit. This is Large ribosomal subunit protein bL20 from Chlamydia abortus (strain DSM 27085 / S26/3) (Chlamydophila abortus).